Here is a 263-residue protein sequence, read N- to C-terminus: Polyglutamine-binding protein 1 (263 aa).

The WW domain maps to 46–80 (EGLPPSWYKVFDPSCGLPYYWNVDTDLVSWLSPHD). The residue at position 94 (serine 94) is a Phosphoserine. Positions 94–263 (SSNADAEEKL…AEASRTKQQD (170 aa)) are disordered. A compositionally biased stretch (basic and acidic residues) spans 99–173 (AEEKLDRSHE…DKVDREESKE (75 aa)). 14 tandem repeats follow at residues 104 to 110 (DRSHEKS), 111 to 117 (DRGHEKS), 118 to 124 (DRGHEKS), 125 to 131 (DRSHEKS), 132 to 138 (ERNHEKS), 139 to 140 (DR), 141 to 142 (DR), 143 to 144 (ER), 150 to 151 (DR), 152 to 153 (ER), 154 to 155 (ER), 156 to 157 (DR), 158 to 159 (DR), and 160 to 161 (DR). Positions 104–138 (DRSHEKSDRGHEKSDRGHEKSDRSHEKSERNHEKS) are 5 X 7 AA approximate tandem repeats of D-R-[SG]-H-D-K-S. The segment at 139–144 (DRDRER) is 3 X 2 AA tandem repeats of [DE]-R. Positions 150-161 (DRERERDRDRDR) are 6 X 2 AA tandem repeats of [DE]-R. Residues 243-253 (YPSPGAVLRAN) are important for interaction with TXNL4A. At serine 245 the chain carries Phosphoserine.

As to quaternary structure, interacts with POU3F2/Brn-2, ATXN1, TXNL4A, HTT and AR. Interaction with ATXN1 correlates positively with the length of the polyglutamine tract. Interacts with RNA polymerase II large subunit in a phosphorylation-dependent manner. Forms a ternary complex with ATXN1 mutant and phosphorylated RNA polymerase II. Interacts (via C-terminus) with TXNL4A and CD2BP2. Interacts (via WW domain) with ATN1 and SF3B1, and may interact with additional splice factors. Interacts (via WW domain) with WBP11; Leading to reduce interaction between PQBP1 and TXNL4A. Interacts with CAPRIN1. Interacts with DDX1. Interacts with SFPQ. Interacts with KHSRP.

The protein resides in the nucleus. It is found in the nucleus speckle. Its subcellular location is the cytoplasmic granule. Its function is as follows. Intrinsically disordered protein that acts as a scaffold, and which is involved in different processes, such as pre-mRNA splicing, transcription regulation, innate immunity and neuron development. Interacts with splicing-related factors via the intrinsically disordered region and regulates alternative splicing of target pre-mRNA species. May suppress the ability of POU3F2 to transactivate the DRD1 gene in a POU3F2 dependent manner. Can activate transcription directly or via association with the transcription machinery. May be involved in ATXN1 mutant-induced cell death. The interaction with ATXN1 mutant reduces levels of phosphorylated RNA polymerase II large subunit. Involved in the assembly of cytoplasmic stress granule, possibly by participating in the transport of neuronal RNA granules. Also acts as an innate immune sensor of infection by retroviruses, by detecting the presence of reverse-transcribed DNA in the cytosol. Directly binds retroviral reverse-transcribed DNA in the cytosol and interacts with CGAS, leading to activate the cGAS-STING signaling pathway, triggering type-I interferon production. The sequence is that of Polyglutamine-binding protein 1 (PQBP1) from Bos taurus (Bovine).